The sequence spans 307 residues: Ribosomal RNA small subunit methyltransferase H (307 aa).

S-adenosyl-L-methionine-binding positions include 32–34 (GGH), Asp52, Phe78, Asp99, and Gln106. Residues 287 to 307 (KEEIESNKRSHSAKLRVAEKV) form a disordered region.

This sequence belongs to the methyltransferase superfamily. RsmH family.

It is found in the cytoplasm. The enzyme catalyses cytidine(1402) in 16S rRNA + S-adenosyl-L-methionine = N(4)-methylcytidine(1402) in 16S rRNA + S-adenosyl-L-homocysteine + H(+). In terms of biological role, specifically methylates the N4 position of cytidine in position 1402 (C1402) of 16S rRNA. This Caldicellulosiruptor bescii (strain ATCC BAA-1888 / DSM 6725 / KCTC 15123 / Z-1320) (Anaerocellum thermophilum) protein is Ribosomal RNA small subunit methyltransferase H.